Here is a 256-residue protein sequence, read N- to C-terminus: uncharacterized protein (256 aa).

Residues 1 to 24 (MIKRVNKLVLGISLLFLVISITAG) form the signal peptide. The N-palmitoyl cysteine moiety is linked to residue Cys25. Cys25 carries the S-diacylglycerol cysteine lipid modification.

It belongs to the staphylococcal tandem lipoprotein family.

It is found in the cell membrane. This is an uncharacterized protein from Staphylococcus aureus.